A 382-amino-acid polypeptide reads, in one-letter code: Galactokinase (382 aa).

Glutamate 34–aspartate 37 contacts substrate. Residue glycine 124–serine 130 participates in ATP binding. 2 residues coordinate Mg(2+): serine 130 and glutamate 162. Catalysis depends on aspartate 174, which acts as the Proton acceptor. Substrate is bound at residue tyrosine 223.

The protein belongs to the GHMP kinase family. GalK subfamily.

The protein localises to the cytoplasm. The catalysed reaction is alpha-D-galactose + ATP = alpha-D-galactose 1-phosphate + ADP + H(+). It participates in carbohydrate metabolism; galactose metabolism. Catalyzes the transfer of the gamma-phosphate of ATP to D-galactose to form alpha-D-galactose-1-phosphate (Gal-1-P). This is Galactokinase from Salmonella typhi.